Reading from the N-terminus, the 556-residue chain is Butanoate--CoA ligase AAE1 (556 aa).

Residues 554–556 (SKL) carry the Microbody targeting signal motif.

Belongs to the ATP-dependent AMP-binding enzyme family. Expressed in roots, leaves, stems, flowers and developing seeds.

The protein localises to the peroxisome. It catalyses the reaction butanoate + ATP + CoA = butanoyl-CoA + AMP + diphosphate. It carries out the reaction hexanoate + ATP + CoA = hexanoyl-CoA + AMP + diphosphate. The enzyme catalyses pentanoate + ATP + CoA = pentanoyl-CoA + AMP + diphosphate. The catalysed reaction is 4-methylpentanoate + ATP + CoA = 4-methylpentanoyl-CoA + AMP + diphosphate. Its function is as follows. Catalyzes the ligation of CoA on butanoate to produce butanoyl-CoA. Can also use hexanoate, pentanoate and 4-methylpentanoate as substrates with a lower efficiency. In Arabidopsis thaliana (Mouse-ear cress), this protein is Butanoate--CoA ligase AAE1.